The following is a 137-amino-acid chain: Phosphoribosyl-ATP pyrophosphatase (137 aa).

The segment covering 114 to 124 (EGTSGIEEKAL) has biased composition (basic and acidic residues). Residues 114 to 137 (EGTSGIEEKALRKSLQRAAEEAQP) are disordered.

Belongs to the PRA-PH family.

The protein localises to the cytoplasm. It catalyses the reaction 1-(5-phospho-beta-D-ribosyl)-ATP + H2O = 1-(5-phospho-beta-D-ribosyl)-5'-AMP + diphosphate + H(+). The protein operates within amino-acid biosynthesis; L-histidine biosynthesis; L-histidine from 5-phospho-alpha-D-ribose 1-diphosphate: step 2/9. The protein is Phosphoribosyl-ATP pyrophosphatase of Paracidovorax citrulli (strain AAC00-1) (Acidovorax citrulli).